Reading from the N-terminus, the 360-residue chain is 3-isopropylmalate dehydrogenase (360 aa).

Residue 76-89 coordinates NAD(+); the sequence is GPKWDTIERDIRPE. Residues R96, R106, R134, and D224 each contribute to the substrate site. D224, D248, and D252 together coordinate Mg(2+). 282 to 294 contributes to the NAD(+) binding site; that stretch reads GSAPDIAGKGIAN.

This sequence belongs to the isocitrate and isopropylmalate dehydrogenases family. LeuB type 1 subfamily. As to quaternary structure, homodimer. It depends on Mg(2+) as a cofactor. Requires Mn(2+) as cofactor.

It is found in the cytoplasm. It catalyses the reaction (2R,3S)-3-isopropylmalate + NAD(+) = 4-methyl-2-oxopentanoate + CO2 + NADH. It functions in the pathway amino-acid biosynthesis; L-leucine biosynthesis; L-leucine from 3-methyl-2-oxobutanoate: step 3/4. Its function is as follows. Catalyzes the oxidation of 3-carboxy-2-hydroxy-4-methylpentanoate (3-isopropylmalate) to 3-carboxy-4-methyl-2-oxopentanoate. The product decarboxylates to 4-methyl-2 oxopentanoate. The sequence is that of 3-isopropylmalate dehydrogenase from Pseudomonas savastanoi pv. phaseolicola (strain 1448A / Race 6) (Pseudomonas syringae pv. phaseolicola (strain 1448A / Race 6)).